The following is a 172-amino-acid chain: Protein GrpE (172 aa).

Belongs to the GrpE family. In terms of assembly, homodimer.

The protein localises to the cytoplasm. Participates actively in the response to hyperosmotic and heat shock by preventing the aggregation of stress-denatured proteins, in association with DnaK and GrpE. It is the nucleotide exchange factor for DnaK and may function as a thermosensor. Unfolded proteins bind initially to DnaJ; upon interaction with the DnaJ-bound protein, DnaK hydrolyzes its bound ATP, resulting in the formation of a stable complex. GrpE releases ADP from DnaK; ATP binding to DnaK triggers the release of the substrate protein, thus completing the reaction cycle. Several rounds of ATP-dependent interactions between DnaJ, DnaK and GrpE are required for fully efficient folding. The sequence is that of Protein GrpE from Thermotoga petrophila (strain ATCC BAA-488 / DSM 13995 / JCM 10881 / RKU-1).